The following is a 452-amino-acid chain: Probable ECA polymerase (452 aa).

11 consecutive transmembrane segments (helical) span residues 6–26 (FSGL…LTWF), 37–57 (VFFS…TSVL), 63–83 (VGVA…CFYG), 118–138 (VILM…NGFL), 155–175 (GVAL…VYFL), 181–201 (AWLF…MIVG), 207–227 (IIIA…ISLW), 228–248 (MLAA…LKRY), 341–361 (LVVM…GLII), 378–398 (YKAA…IVLV), and 410–430 (VFFL…FWLF).

The protein belongs to the WzyE family. As to quaternary structure, probably part of a complex composed of WzxE, WzyE and WzzE.

It localises to the cell inner membrane. Its pathway is bacterial outer membrane biogenesis; enterobacterial common antigen biosynthesis. In terms of biological role, probably involved in the polymerization of enterobacterial common antigen (ECA) trisaccharide repeat units. This chain is Probable ECA polymerase, found in Salmonella gallinarum (strain 287/91 / NCTC 13346).